The primary structure comprises 603 residues: Myotubularin (603 aa).

The span at 1–13 (MASAPTSKYNSHS) shows a compositional bias: polar residues. Residues 1 to 32 (MASAPTSKYNSHSLENESIKRTSRDGVNRDVG) form a disordered region. Residues S13 and S18 each carry the phosphoserine modification. Positions 14 to 32 (LENESIKRTSRDGVNRDVG) are enriched in basic and acidic residues. The GRAM domain occupies 29 to 97 (RDVGETLPRL…GVISRIEKMG (69 aa)). In terms of domain architecture, Myotubularin phosphatase spans 163-538 (GWTVYNPVEE…RHLELWVNYY (376 aa)). The a 1,2-diacyl-sn-glycero-3-phospho-(1D-myo-inositol-3,5-bisphosphate) site is built by N288, N313, and I314. Residues N288, N313, and I314 each contribute to the a 1,2-diacyl-sn-glycero-3-phospho-(1D-myo-inositol-3-phosphate) site. Residue C375 is the Phosphocysteine intermediate of the active site. The a 1,2-diacyl-sn-glycero-3-phospho-(1D-myo-inositol-3,5-bisphosphate) site is built by S376, D377, G378, W379, D380, R381, K417, and R421. A 1,2-diacyl-sn-glycero-3-phospho-(1D-myo-inositol-3-phosphate) contacts are provided by S376, D377, G378, W379, D380, and R381. R421 contacts a 1,2-diacyl-sn-glycero-3-phospho-(1D-myo-inositol-3-phosphate). T495 carries the phosphothreonine modification. Residues 580–603 (AKLSDPSASPSSPSQMMPHVQTHF) form a disordered region. Residues 583 to 593 (SDPSASPSSPS) are compositionally biased toward low complexity. S588 is modified (phosphoserine).

It belongs to the protein-tyrosine phosphatase family. Non-receptor class myotubularin subfamily. Heterodimer with MTMR12. Interacts with KMT2A/MLL1 (via SET domain). Interacts with DES in skeletal muscle but not in cardiac muscle. Interacts with SPEG.

The protein resides in the cytoplasm. It localises to the cell membrane. Its subcellular location is the cell projection. The protein localises to the filopodium. It is found in the ruffle. The protein resides in the late endosome. It localises to the myofibril. Its subcellular location is the sarcomere. The enzyme catalyses a 1,2-diacyl-sn-glycero-3-phospho-(1D-myo-inositol-3-phosphate) + H2O = a 1,2-diacyl-sn-glycero-3-phospho-(1D-myo-inositol) + phosphate. It carries out the reaction a 1,2-diacyl-sn-glycero-3-phospho-(1D-myo-inositol-3,5-bisphosphate) + H2O = a 1,2-diacyl-sn-glycero-3-phospho-(1D-myo-inositol-5-phosphate) + phosphate. The catalysed reaction is 1,2-dioctanoyl-sn-glycero-3-phospho-(1-D-myo-inositol-3-phosphate) + H2O = 1,2-dioctanoyl-sn-glycero-3-phospho-(1D-myo-inositol) + phosphate. It catalyses the reaction 1,2-dioctanoyl-sn-glycero-3-phospho-(1D-myo-inositol-3,5-bisphosphate) + H2O = 1,2-dioctanoyl-sn-glycero-3-phospho-(1D-myo-inositol-5-phosphate) + phosphate. The enzyme catalyses 1,2-dihexadecanoyl-sn-glycero-3-phospho-(1D-myo-inositol-3,5-phosphate) + H2O = 1,2-dihexadecanoyl-sn-glycero-3-phospho-(1D-myo-inositol-5-phosphate) + phosphate. With respect to regulation, allosterically activated by phosphatidylinositol 5-phosphate (PI5P). Lipid phosphatase which dephosphorylates phosphatidylinositol 3-monophosphate (PI3P) and phosphatidylinositol 3,5-bisphosphate (PI(3,5)P2). Has also been shown to dephosphorylate phosphotyrosine- and phosphoserine-containing peptides. Negatively regulates EGFR degradation through regulation of EGFR trafficking from the late endosome to the lysosome. Plays a role in vacuolar formation and morphology. Regulates desmin intermediate filament assembly and architecture. Plays a role in mitochondrial morphology and positioning. Required for skeletal muscle maintenance but not for myogenesis. In skeletal muscles, stabilizes MTMR12 protein levels. The chain is Myotubularin from Bos taurus (Bovine).